The chain runs to 391 residues: Cystathionine beta-lyase MetC (391 aa).

Lys196 is modified (N6-(pyridoxal phosphate)lysine).

It belongs to the trans-sulfuration enzymes family. As to quaternary structure, homotetramer. Requires pyridoxal 5'-phosphate as cofactor.

The catalysed reaction is L,L-cystathionine + H2O = L-homocysteine + pyruvate + NH4(+). It catalyses the reaction an S-substituted L-cysteine + H2O = a thiol + pyruvate + NH4(+). Its pathway is amino-acid biosynthesis; L-methionine biosynthesis via de novo pathway; L-homocysteine from L-cystathionine: step 1/1. Cystathionine beta-lyase activity is inhibited by sweat components such as glycine, serine and ammonium sulfate. Inhibited by cystathionine at a concentration higher than 6 mM. Its function is as follows. Catalyzes the transformation of cystathionine into homocysteine. Can also catalyze, at low levels, the conversion of cystathionine into methionine and the conversion of methionine into methanethiol. This Staphylococcus haemolyticus (strain JCSC1435) protein is Cystathionine beta-lyase MetC.